Here is a 360-residue protein sequence, read N- to C-terminus: Peptide chain release factor 1 (360 aa).

N5-methylglutamine is present on Q235.

It belongs to the prokaryotic/mitochondrial release factor family. Methylated by PrmC. Methylation increases the termination efficiency of RF1.

The protein resides in the cytoplasm. Functionally, peptide chain release factor 1 directs the termination of translation in response to the peptide chain termination codons UAG and UAA. The chain is Peptide chain release factor 1 from Burkholderia multivorans (strain ATCC 17616 / 249).